We begin with the raw amino-acid sequence, 396 residues long: Protein nipi-4 (396 aa).

Residues 1–20 (MELDHTPPPSVLNDNCSASY) lie on the Extracellular side of the membrane. N-linked (GlcNAc...) asparagine glycosylation occurs at Asn15. The helical transmembrane segment at 21–41 (MTPYATVIAMSGLYLLAIFYF) threads the bilayer. Residues 42 to 396 (CKKSKKMCQP…EHHCQSVIHY (355 aa)) are Cytoplasmic-facing. A Protein kinase domain is found at 81 to 368 (EVDDFQIGQT…SRLSELHHIV (288 aa)). ATP is bound by residues 87–95 (IGQTADGFI) and Lys111.

Belongs to the protein kinase superfamily. Tyr protein kinase family. In terms of tissue distribution, expressed in the epidermis of larvae and adults and in vulval and rectal cells.

It localises to the membrane. In terms of biological role, pseudokinase which plays a role in resistance to fungal infection by promoting expression of antimicrobial peptides (nlp-29, nlp-31, nlp-34, cnc-1, cnc-2 and cnc-4) in the epidermis. In addition, up-regulates nlp-29 expression upon physical wounding and in response to phorbol ester PMA treatment. This chain is Protein nipi-4, found in Caenorhabditis elegans.